The primary structure comprises 514 residues: CENP-B homolog protein 2 (514 aa).

Positions 70–145 (QIRRNRQGKY…KKRCLKHGLK (76 aa)) constitute an HTH CENPB-type domain. In terms of domain architecture, DDE-1 spans 172–384 (FDPKDIFNMD…FEPSIIYNCF (213 aa)).

Its subcellular location is the nucleus. The protein localises to the chromosome. It is found in the centromere. In terms of biological role, binds to the central core and core-associated repeat regions of centromeric heterochromatin. In Schizosaccharomyces pombe (strain 972 / ATCC 24843) (Fission yeast), this protein is CENP-B homolog protein 2 (cbh2).